The following is a 642-amino-acid chain: Zinc finger protein 14 (642 aa).

Residues 4-76 (VSFEDVAVNF…MVERLCESRK (73 aa)) form the KRAB domain. Positions 77-99 (GSKCGETTSQMPNVNINKETSTG) are disordered. A compositionally biased stretch (polar residues) spans 81-99 (GETTSQMPNVNINKETSTG). The C2H2-type 1 zinc finger occupies 103–125 (HECSFCGKDFMHHSSLNRHMRSH). The C2H2-type 2; degenerate zinc-finger motif lies at 141–163 (CKRKAVGKTFSYRHCVRKHERTH). The C2H2-type 3 zinc finger occupies 169 to 191 (YECKQCGKAFIYYQPFQRHERIH). Residues 197–217 (YECKQCGKTFIYYQSFQKHAH) form a C2H2-type 4; atypical zinc finger. C2H2-type zinc fingers lie at residues 223–245 (YECK…ERTH), 251–273 (YECK…ERTH), 279–301 (YKCK…KRTH), 307–329 (YECK…VITH), 335–357 (YKCK…ERTH), 363–385 (YECK…ERTH), 391–413 (YECK…ETTH), 419–441 (YECK…ERTH), 447–469 (YECK…ERSH), 475–497 (YECK…ERTH), 503–525 (YECK…EKIH), 531–553 (FECK…ERTH), 559–581 (YQCK…ERTH), 587–609 (YRCK…ERSH), and 615–637 (YECK…ERTH).

It belongs to the krueppel C2H2-type zinc-finger protein family.

The protein resides in the nucleus. In terms of biological role, may be involved in transcriptional regulation. In Macaca fascicularis (Crab-eating macaque), this protein is Zinc finger protein 14 (ZNF14).